The primary structure comprises 282 residues: NADPH-dependent 7-cyano-7-deazaguanine reductase (282 aa).

Substrate is bound at residue 88-90 (IES). Residue 90-91 (SK) coordinates NADPH. Catalysis depends on Cys-190, which acts as the Thioimide intermediate. The active-site Proton donor is Asp-197. 229 to 230 (HE) is a substrate binding site. NADPH is bound at residue 258 to 259 (RG).

The protein belongs to the GTP cyclohydrolase I family. QueF type 2 subfamily. Homodimer.

The protein localises to the cytoplasm. It carries out the reaction 7-aminomethyl-7-carbaguanine + 2 NADP(+) = 7-cyano-7-deazaguanine + 2 NADPH + 3 H(+). It participates in tRNA modification; tRNA-queuosine biosynthesis. Functionally, catalyzes the NADPH-dependent reduction of 7-cyano-7-deazaguanine (preQ0) to 7-aminomethyl-7-deazaguanine (preQ1). This is NADPH-dependent 7-cyano-7-deazaguanine reductase from Escherichia coli (strain UTI89 / UPEC).